The sequence spans 353 residues: MESEGWPALQPLLCFAWIAATLPIIAAALPIPTAVGGHLLRRLLSAFSSRGKTVRPSPASSSGSSSSKAKFTVPQKYFMHFYVVGVLATTILLLAIWFYAYMKLTPLLLESSSYSTIFSHLVGSNSFSFGRVRSRTMGHKYRVWRTVFALLLMEVQVLRRLYETEHVFHYSPARMHIVGYLTGLFYYVAAPLSLASSCIPEAAEYFQGQVPEFVVKGRARMPDLVIDSSSLLQPLLKLGWTQWIGAVIFIWGSLHQIRCHAILGSLREHKDSDEYVIPCSDCFNRVSCPHYLAELVIYFGMLVASGAEDIPVWFLFIFLITNLSFAAVETYNWYLQKFEDYPRSRYAIIPFVC.

The next 6 membrane-spanning stretches (helical) occupy residues 11-31, 78-98, 175-195, 234-254, 291-308, and 313-335; these read PLLC…ALPI, FMHF…AIWF, MHIV…LSLA, PLLK…WGSL, YLAE…SGAE, and WFLF…NWYL.

This sequence belongs to the steroid 5-alpha reductase family. Polyprenal reductase subfamily.

The protein localises to the cell membrane. It carries out the reaction a di-trans,poly-cis-dolichal + NADP(+) = a di-trans,poly-cis-polyprenal + NADPH + H(+). The protein operates within protein modification; protein glycosylation. Functionally, plays a key role in early steps of protein N-linked glycosylation by being involved in the conversion of polyprenol into dolichol. Acts as a polyprenal reductase that mediates the reduction of polyprenal into dolichal in a NADP-dependent mechanism. Dolichols are required for the synthesis of dolichol-linked monosaccharides and the oligosaccharide precursor used for N-glycosylation. The sequence is that of Polyprenal reductase 2 from Oryza sativa subsp. indica (Rice).